Here is a 61-residue protein sequence, read N- to C-terminus: Photosystem II reaction center protein K (61 aa).

A propeptide spanning residues 1 to 24 is cleaved from the precursor; sequence MLNIFSLIWICLNSALYSSGFFFG. Residues 36–56 form a helical membrane-spanning segment; the sequence is IIDFMPVIPVFFFLLAFVWQA.

It belongs to the PsbK family. In terms of assembly, PSII is composed of 1 copy each of membrane proteins PsbA, PsbB, PsbC, PsbD, PsbE, PsbF, PsbH, PsbI, PsbJ, PsbK, PsbL, PsbM, PsbT, PsbX, PsbY, PsbZ, Psb30/Ycf12, at least 3 peripheral proteins of the oxygen-evolving complex and a large number of cofactors. It forms dimeric complexes.

It is found in the plastid. The protein resides in the chloroplast thylakoid membrane. In terms of biological role, one of the components of the core complex of photosystem II (PSII). PSII is a light-driven water:plastoquinone oxidoreductase that uses light energy to abstract electrons from H(2)O, generating O(2) and a proton gradient subsequently used for ATP formation. It consists of a core antenna complex that captures photons, and an electron transfer chain that converts photonic excitation into a charge separation. The sequence is that of Photosystem II reaction center protein K from Coffea arabica (Arabian coffee).